We begin with the raw amino-acid sequence, 171 residues long: Shikimate kinase (171 aa).

14-19 provides a ligand contact to ATP; the sequence is GAGKST. Residue Ser18 coordinates Mg(2+). Residues Asp36, Arg60, and Gly82 each contribute to the substrate site. Arg120 provides a ligand contact to ATP. Arg139 is a substrate binding site. Gln156 contributes to the ATP binding site.

It belongs to the shikimate kinase family. Monomer. The cofactor is Mg(2+).

The protein resides in the cytoplasm. It catalyses the reaction shikimate + ATP = 3-phosphoshikimate + ADP + H(+). It participates in metabolic intermediate biosynthesis; chorismate biosynthesis; chorismate from D-erythrose 4-phosphate and phosphoenolpyruvate: step 5/7. In terms of biological role, catalyzes the specific phosphorylation of the 3-hydroxyl group of shikimic acid using ATP as a cosubstrate. The chain is Shikimate kinase from Shewanella pealeana (strain ATCC 700345 / ANG-SQ1).